A 1293-amino-acid polypeptide reads, in one-letter code: DNA-directed RNA polymerase subunit beta' (1293 aa).

Zn(2+) is bound by residues Cys60, Cys62, Cys75, and Cys78. Mg(2+) is bound by residues Asp535, Asp537, and Asp539. Residues Cys877, Cys953, Cys960, and Cys963 each coordinate Zn(2+).

This sequence belongs to the RNA polymerase beta' chain family. The RNAP catalytic core consists of 2 alpha, 1 beta, 1 beta' and 1 omega subunit. When a sigma factor is associated with the core the holoenzyme is formed, which can initiate transcription. Mg(2+) serves as cofactor. The cofactor is Zn(2+).

It catalyses the reaction RNA(n) + a ribonucleoside 5'-triphosphate = RNA(n+1) + diphosphate. DNA-dependent RNA polymerase catalyzes the transcription of DNA into RNA using the four ribonucleoside triphosphates as substrates. The sequence is that of DNA-directed RNA polymerase subunit beta' from Kineococcus radiotolerans (strain ATCC BAA-149 / DSM 14245 / SRS30216).